A 630-amino-acid polypeptide reads, in one-letter code: Protein mono-ADP-ribosyltransferase PARP6 (630 aa).

Cys-237 bears the ADP-ribosylcysteine mark. Positions Glu-394–Met-620 constitute a PARP catalytic domain. Residue Asp-600 is modified to ADP-ribosyl aspartic acid.

It belongs to the ARTD/PARP family. In terms of processing, auto-mono-ADP-ribosylated.

The catalysed reaction is L-aspartyl-[protein] + NAD(+) = 4-O-(ADP-D-ribosyl)-L-aspartyl-[protein] + nicotinamide. It catalyses the reaction L-cysteinyl-[protein] + NAD(+) = S-(ADP-D-ribosyl)-L-cysteinyl-[protein] + nicotinamide + H(+). Its function is as follows. Mono-ADP-ribosyltransferase that mediates mono-ADP-ribosylation of target proteins. This is Protein mono-ADP-ribosyltransferase PARP6 from Homo sapiens (Human).